Reading from the N-terminus, the 21-residue chain is Outer membrane protein P2 (21 aa).

Disulfide bond interactions within and between MOMP molecules and other components form high molecular-weight oligomers.

It is found in the cell outer membrane. Structural rigidity of the outer membrane of elementary bodies and porin forming, permitting diffusion of solutes through the intracellular reticulate body membrane. Binds carcinoembryonic antigen (CEA). This is Outer membrane protein P2 from Glaesserella parasuis (Haemophilus parasuis).